The following is a 182-amino-acid chain: Ribosome-recycling factor (182 aa).

This sequence belongs to the RRF family.

The protein localises to the cytoplasm. Functionally, responsible for the release of ribosomes from messenger RNA at the termination of protein biosynthesis. May increase the efficiency of translation by recycling ribosomes from one round of translation to another. In Gloeothece citriformis (strain PCC 7424) (Cyanothece sp. (strain PCC 7424)), this protein is Ribosome-recycling factor.